A 321-amino-acid chain; its full sequence is Protein BIG GRAIN 1-like E (321 aa).

The tract at residues 134-217 (AGSKKNKSKS…PPPYLNTPTK (84 aa)) is disordered. The span at 135-147 (GSKKNKSKSKSKT) shows a compositional bias: basic residues. Over residues 172–206 (ISHFFSSSRSTSTTTTTTASSSSKSLISSSSSGFR) the composition is skewed to low complexity.

The protein belongs to the BIG GRAIN 1 (BG1) plant protein family.

It localises to the cell membrane. Its function is as follows. Involved in auxin transport. Regulator of the auxin signaling pathway. In Arabidopsis thaliana (Mouse-ear cress), this protein is Protein BIG GRAIN 1-like E.